A 383-amino-acid chain; its full sequence is Probable aspartate/prephenate aminotransferase (383 aa).

Positions 39, 125, and 175 each coordinate L-aspartate. At Lys234 the chain carries N6-(pyridoxal phosphate)lysine. Arg361 serves as a coordination point for L-aspartate.

It belongs to the class-I pyridoxal-phosphate-dependent aminotransferase family. Homodimer. It depends on pyridoxal 5'-phosphate as a cofactor.

The protein localises to the cytoplasm. It catalyses the reaction L-aspartate + 2-oxoglutarate = oxaloacetate + L-glutamate. The enzyme catalyses L-arogenate + oxaloacetate = prephenate + L-aspartate. Functionally, catalyzes the reversible conversion of aspartate and 2-oxoglutarate to glutamate and oxaloacetate. Can also transaminate prephenate in the presence of aspartate. The polypeptide is Probable aspartate/prephenate aminotransferase (aspC) (Thermus aquaticus).